Reading from the N-terminus, the 216-residue chain is Probable RNA 2'-phosphotransferase 1 (216 aa).

Belongs to the KptA/TPT1 family.

Its function is as follows. Removes the 2'-phosphate from RNA via an intermediate in which the phosphate is ADP-ribosylated by NAD followed by a presumed transesterification to release the RNA and generate ADP-ribose 1''-2''-cyclic phosphate (APPR&gt;P). May function as an ADP-ribosylase. This chain is Probable RNA 2'-phosphotransferase 1 (kptA1), found in Archaeoglobus fulgidus (strain ATCC 49558 / DSM 4304 / JCM 9628 / NBRC 100126 / VC-16).